The primary structure comprises 260 residues: Adenosylcobinamide-GDP ribazoletransferase (260 aa).

Transmembrane regions (helical) follow at residues 31–51, 55–75, 111–131, 140–160, 177–197, 202–222, and 234–254; these read IIFF…LVNI, IFSS…VRGI, VIGV…FAFV, FLIF…LMYY, ISSW…VYFT, FIFL…LKKF, and HLGA…LLGE.

Belongs to the CobS family. Mg(2+) serves as cofactor.

Its subcellular location is the cell inner membrane. The enzyme catalyses alpha-ribazole + adenosylcob(III)inamide-GDP = adenosylcob(III)alamin + GMP + H(+). It catalyses the reaction alpha-ribazole 5'-phosphate + adenosylcob(III)inamide-GDP = adenosylcob(III)alamin 5'-phosphate + GMP + H(+). Its pathway is cofactor biosynthesis; adenosylcobalamin biosynthesis; adenosylcobalamin from cob(II)yrinate a,c-diamide: step 7/7. In terms of biological role, joins adenosylcobinamide-GDP and alpha-ribazole to generate adenosylcobalamin (Ado-cobalamin). Also synthesizes adenosylcobalamin 5'-phosphate from adenosylcobinamide-GDP and alpha-ribazole 5'-phosphate. The sequence is that of Adenosylcobinamide-GDP ribazoletransferase from Thermodesulfovibrio yellowstonii (strain ATCC 51303 / DSM 11347 / YP87).